Consider the following 250-residue polypeptide: Heat stress transcription factor C-1b (250 aa).

Positions 129 to 182 (EEGEEVRGTIEAVQRLREEQRGMEEELQAMDQRLRAAESRPGQMMAFLAKLADE) form a coiled coil. The tract at residues 144 to 180 (LREEQRGMEEELQAMDQRLRAAESRPGQMMAFLAKLA) is hydrophobic repeat HR-A/B. The tract at residues 199–226 (AAGNNGSDPCKRRRIGADTGRGGVATGG) is disordered. The short motif at 209–212 (KRRR) is the Nuclear localization signal element.

This sequence belongs to the HSF family. Class C subfamily. Homotrimer. In terms of processing, exhibits temperature-dependent phosphorylation.

Its subcellular location is the nucleus. Transcriptional regulator that specifically binds DNA of heat shock promoter elements (HSE). In Oryza sativa subsp. japonica (Rice), this protein is Heat stress transcription factor C-1b (HSFC1B).